A 704-amino-acid polypeptide reads, in one-letter code: Fatty acid oxidation complex subunit alpha (704 aa).

Residues 1-190 form an enoyl-CoA hydratase region; the sequence is MSEQKAFSLK…KLGVVDACVP (190 aa). A 3-hydroxyacyl-CoA dehydrogenase region spans residues 308-704; sequence TAVNKVGVLG…RAGEGRNFYD (397 aa).

In the N-terminal section; belongs to the enoyl-CoA hydratase/isomerase family. The protein in the central section; belongs to the 3-hydroxyacyl-CoA dehydrogenase family. In terms of assembly, heterotetramer of two alpha chains (FadJ) and two beta chains (FadI).

It is found in the cytoplasm. The enzyme catalyses a (3S)-3-hydroxyacyl-CoA = a (2E)-enoyl-CoA + H2O. The catalysed reaction is a 4-saturated-(3S)-3-hydroxyacyl-CoA = a (3E)-enoyl-CoA + H2O. It catalyses the reaction a (3S)-3-hydroxyacyl-CoA + NAD(+) = a 3-oxoacyl-CoA + NADH + H(+). It carries out the reaction (3S)-3-hydroxybutanoyl-CoA = (3R)-3-hydroxybutanoyl-CoA. The protein operates within lipid metabolism; fatty acid beta-oxidation. Its function is as follows. Catalyzes the formation of a hydroxyacyl-CoA by addition of water on enoyl-CoA. Also exhibits 3-hydroxyacyl-CoA epimerase and 3-hydroxyacyl-CoA dehydrogenase activities. The polypeptide is Fatty acid oxidation complex subunit alpha (Vibrio campbellii (strain ATCC BAA-1116)).